Reading from the N-terminus, the 220-residue chain is Uracil-DNA glycosylase (220 aa).

D65 functions as the Proton acceptor in the catalytic mechanism.

This sequence belongs to the uracil-DNA glycosylase (UDG) superfamily. UNG family.

It is found in the cytoplasm. The catalysed reaction is Hydrolyzes single-stranded DNA or mismatched double-stranded DNA and polynucleotides, releasing free uracil.. Excises uracil residues from the DNA which can arise as a result of misincorporation of dUMP residues by DNA polymerase or due to deamination of cytosine. The sequence is that of Uracil-DNA glycosylase from Azobacteroides pseudotrichonymphae genomovar. CFP2.